The chain runs to 1829 residues: DNA polymerase (1829 aa).

DOD-type homing endonuclease domains are found at residues 527-668 and 1136-1269; these read LSGI…SLGI and FLGY…SLGV.

Belongs to the DNA polymerase type-B family. This protein undergoes a protein self splicing that involves a post-translational excision of the three intervening regions (inteins) followed by peptide ligation.

It catalyses the reaction DNA(n) + a 2'-deoxyribonucleoside 5'-triphosphate = DNA(n+1) + diphosphate. This Thermococcus aggregans protein is DNA polymerase (pol).